We begin with the raw amino-acid sequence, 1098 residues long: Ubiquitin carboxyl-terminal hydrolase 36 (1098 aa).

The segment covering 72–86 (RHRSGDELQARKPGT) has biased composition (basic and acidic residues). The disordered stretch occupies residues 72-97 (RHRSGDELQARKPGTERVSGSGGDGV). The USP domain occupies 122 to 423 (AGLHNLGNTC…QAYVLFYLRI (302 aa)). The active-site Nucleophile is Cys131. Catalysis depends on His382, which acts as the Proton acceptor. 2 disordered regions span residues 428–464 (KSPE…VPSP) and 483–574 (EVGV…RDTI). Phosphoserine is present on residues Ser429, Ser463, Ser547, and Ser578. A compositionally biased stretch (low complexity) spans 540–558 (PLQSLTTSPTTSQGSPGTG). A disordered region spans residues 589 to 640 (GHRLKGEGSGVDLEKGDSSSSSPEHSASSDPAKAPQTAESRAAHACDSQGTN). Positions 606–617 (SSSSSPEHSASS) are enriched in low complexity. At Ser663 the chain carries Phosphoserine. Disordered regions lie at residues 664–710 (PALS…SPSA) and 722–973 (HPVV…ALSV). The segment covering 665-677 (ALSSTTTEPTSLM) has biased composition (polar residues). The residue at position 678 (Ser678) is a Phosphoserine. The span at 683 to 692 (KKLALSAKKA) shows a compositional bias: low complexity. Ser709 bears the Phosphoserine mark. Residues 746-763 (HPHSASLSSSSAKPLGTS) are compositionally biased toward low complexity. The segment covering 853–878 (GQFQDQSWSSGSQKEEGTQPQVNGHQ) has biased composition (polar residues). The span at 889-898 (SSRKRRKRKR) shows a compositional bias: basic residues. Over residues 901-917 (GLSQEATPSQDLIQHSC) the composition is skewed to polar residues. Positions 921-932 (DHSEPEARTELQ) are enriched in basic and acidic residues. Residues 933–943 (KKKKKKRRKRK) are compositionally biased toward basic residues. Residues 944 to 960 (PEPQQDEESKHPGDQRS) are compositionally biased toward basic and acidic residues.

It belongs to the peptidase C19 family. As to quaternary structure, interacts with isoform 3 of FBXW7; the interaction inhibits MYC degradation induced by SCF(FBW7) complex. Interacts with NTRK1; USP36 does not deubiquitinate NTRK1. Interacts with NEDD4L (via domains WW1, 3 and 4); the interaction inhibits ubiquitination of, at least, NTRK1, KCNQ2 and KCNQ3 by NEDD4L. Interacts (via C-terminus) with EXOSC10 (via C-terminus); the interaction is facilitated by the association with RNA and promotes sumoylation of EXOSC10. Post-translationally, polyubiquitinated by NEDD4L, no effect on USP36 protein levels. Both proteins interact with and regulate each other's ubiquitination levels.

The protein localises to the nucleus. Its subcellular location is the nucleolus. The protein resides in the cytoplasm. It catalyses the reaction Thiol-dependent hydrolysis of ester, thioester, amide, peptide and isopeptide bonds formed by the C-terminal Gly of ubiquitin (a 76-residue protein attached to proteins as an intracellular targeting signal).. Functionally, deubiquitinase essential for the regulation of nucleolar structure and function. Required for cell and organism viability. Plays an important role in ribosomal RNA processing and protein synthesis, which is mediated, at least in part, through deubiquitination of DHX33, NPM1 and FBL, regulating their protein stability. Functions as a transcriptional repressor by deubiquiting histone H2B at the promoters of genes critical for cellular differentiation, such as CDKN1A, thereby preventing histone H3 'Lys-4' trimethylation (H3K4). Specifically deubiquitinates MYC in the nucleolus, leading to prevent MYC degradation by the proteasome: acts by specifically interacting with isoform 3 of FBXW7 (FBW7gamma) in the nucleolus and counteracting ubiquitination of MYC by the SCF(FBW7) complex. In contrast, it does not interact with isoform 1 of FBXW7 (FBW7alpha) in the nucleoplasm. Interacts to and regulates the actions of E3 ubiquitin-protein ligase NEDD4L over substrates such as NTRK1, KCNQ2 and KCNQ3, affecting their expression an functions. Deubiquitinates SOD2, regulates SOD2 protein stability. Deubiquitinase activity is required to control selective autophagy activation by ubiquitinated proteins. Promotes CEP63 stabilization through 'Lys-48'-linked deubiquitination leading to increased stability. Acts as a SUMO ligase to promote EXOSC10 sumoylation critical for the nucleolar RNA exosome function in rRNA processing. Binds to pre-rRNAs. The protein is Ubiquitin carboxyl-terminal hydrolase 36 (Usp36) of Mus musculus (Mouse).